The sequence spans 410 residues: Tryptophan synthase beta chain (410 aa).

N6-(pyridoxal phosphate)lysine is present on Lys-98.

Belongs to the TrpB family. As to quaternary structure, tetramer of two alpha and two beta chains. Pyridoxal 5'-phosphate serves as cofactor.

It catalyses the reaction (1S,2R)-1-C-(indol-3-yl)glycerol 3-phosphate + L-serine = D-glyceraldehyde 3-phosphate + L-tryptophan + H2O. It functions in the pathway amino-acid biosynthesis; L-tryptophan biosynthesis; L-tryptophan from chorismate: step 5/5. In terms of biological role, the beta subunit is responsible for the synthesis of L-tryptophan from indole and L-serine. This chain is Tryptophan synthase beta chain, found in Dinoroseobacter shibae (strain DSM 16493 / NCIMB 14021 / DFL 12).